We begin with the raw amino-acid sequence, 270 residues long: DNA-directed RNA polymerase subunit Rpo3 (270 aa).

[3Fe-4S] cluster contacts are provided by cysteine 206, cysteine 209, and cysteine 212.

This sequence belongs to the archaeal Rpo3/eukaryotic RPB3 RNA polymerase subunit family. In terms of assembly, part of the RNA polymerase complex. [3Fe-4S] cluster is required as a cofactor.

It localises to the cytoplasm. It carries out the reaction RNA(n) + a ribonucleoside 5'-triphosphate = RNA(n+1) + diphosphate. Functionally, DNA-dependent RNA polymerase (RNAP) catalyzes the transcription of DNA into RNA using the four ribonucleoside triphosphates as substrates. The sequence is that of DNA-directed RNA polymerase subunit Rpo3 from Methanosphaera stadtmanae (strain ATCC 43021 / DSM 3091 / JCM 11832 / MCB-3).